The following is a 476-amino-acid chain: Cytosolic iron-sulfur assembly component 3 (476 aa).

N-acetylalanine is present on alanine 2. 8 residues coordinate [4Fe-4S] cluster: cysteine 24, cysteine 71, cysteine 74, cysteine 77, cysteine 190, cysteine 246, cysteine 395, and cysteine 399.

This sequence belongs to the NARF family. In terms of assembly, external component of the CIA complex. In the CIA complex, interacts directly with CIAO1 and MMS19.

Functionally, component of the cytosolic iron-sulfur protein assembly (CIA) complex, a multiprotein complex that mediates the incorporation of iron-sulfur cluster into extramitochondrial Fe/S proteins. Seems to negatively regulate the level of HIF1A expression, although this effect could be indirect. This Bos taurus (Bovine) protein is Cytosolic iron-sulfur assembly component 3.